The sequence spans 275 residues: Taurine transport system permease protein TauC (275 aa).

7 helical membrane-spanning segments follow: residues 20–42 (LSRQ…WTVA), 87–107 (IMLA…AMGL), 124–144 (PVPP…GETS), 146–166 (ILLI…AGVK), 186–206 (VLWF…LRIG), 209–229 (VGWS…LGFM), and 236–256 (FLAT…AFLL). In terms of domain architecture, ABC transmembrane type-1 spans 80 to 264 (LAASLTRIML…LLELGLRALQ (185 aa)).

The protein belongs to the binding-protein-dependent transport system permease family. CysTW subfamily.

Its subcellular location is the cell inner membrane. In terms of biological role, part of a binding-protein-dependent transport system for taurine. Probably responsible for the translocation of the substrate across the membrane. This chain is Taurine transport system permease protein TauC (tauC), found in Escherichia coli (strain K12).